Here is a 580-residue protein sequence, read N- to C-terminus: NADH-ubiquinone oxidoreductase chain 5 (580 aa).

A run of 16 helical transmembrane segments spans residues 12–32, 50–70, 92–112, 113–133, 153–173, 176–196, 218–240, 249–269, 274–294, 300–320, 343–363, 378–400, 427–447, 464–484, 500–520, and 560–580; these read FYIL…FLLM, IVMT…VLLI, ILLV…PNLI, SILL…IYFQ, VALL…YIFY, MMKN…AAMT, SALV…FNIL, FLLL…NFEF, IIAL…SIGY, FHLL…GVII, CSCF…AGFY, NFFS…FRLV, IFFL…LMFF, MVCL…FFFI, MWFM…ILGM, and IYLL…LFLN.

It belongs to the complex I subunit 5 family.

The protein localises to the mitochondrion inner membrane. It catalyses the reaction a ubiquinone + NADH + 5 H(+)(in) = a ubiquinol + NAD(+) + 4 H(+)(out). In terms of biological role, core subunit of the mitochondrial membrane respiratory chain NADH dehydrogenase (Complex I) that is believed to belong to the minimal assembly required for catalysis. Complex I functions in the transfer of electrons from NADH to the respiratory chain. The immediate electron acceptor for the enzyme is believed to be ubiquinone. The chain is NADH-ubiquinone oxidoreductase chain 5 from Aedes aegypti (Yellowfever mosquito).